A 344-amino-acid polypeptide reads, in one-letter code: Isopentenyl-diphosphate delta-isomerase (344 aa).

Substrate is bound at residue 9-10 (RK). FMN contacts are provided by residues 65–67 (AMT), serine 95, and asparagine 124. Residue glutamine 154 participates in substrate binding. Glutamate 155 lines the Mg(2+) pocket. Residues lysine 185, threonine 215, 259–261 (GVR), and 280–281 (SG) each bind FMN.

It belongs to the IPP isomerase type 2 family. Homooctamer. Dimer of tetramers. FMN is required as a cofactor. NADPH serves as cofactor. It depends on Mg(2+) as a cofactor.

Its subcellular location is the cytoplasm. The catalysed reaction is isopentenyl diphosphate = dimethylallyl diphosphate. Involved in the biosynthesis of isoprenoids. Catalyzes the 1,3-allylic rearrangement of the homoallylic substrate isopentenyl (IPP) to its allylic isomer, dimethylallyl diphosphate (DMAPP). This is Isopentenyl-diphosphate delta-isomerase from Lacticaseibacillus casei (strain BL23) (Lactobacillus casei).